Consider the following 177-residue polypeptide: ATP synthase subunit delta (177 aa).

This sequence belongs to the ATPase delta chain family. As to quaternary structure, F-type ATPases have 2 components, F(1) - the catalytic core - and F(0) - the membrane proton channel. F(1) has five subunits: alpha(3), beta(3), gamma(1), delta(1), epsilon(1). F(0) has three main subunits: a(1), b(2) and c(10-14). The alpha and beta chains form an alternating ring which encloses part of the gamma chain. F(1) is attached to F(0) by a central stalk formed by the gamma and epsilon chains, while a peripheral stalk is formed by the delta and b chains.

Its subcellular location is the cell membrane. F(1)F(0) ATP synthase produces ATP from ADP in the presence of a proton or sodium gradient. F-type ATPases consist of two structural domains, F(1) containing the extramembraneous catalytic core and F(0) containing the membrane proton channel, linked together by a central stalk and a peripheral stalk. During catalysis, ATP synthesis in the catalytic domain of F(1) is coupled via a rotary mechanism of the central stalk subunits to proton translocation. In terms of biological role, this protein is part of the stalk that links CF(0) to CF(1). It either transmits conformational changes from CF(0) to CF(1) or is implicated in proton conduction. This Macrococcus caseolyticus (strain JCSC5402) (Macrococcoides caseolyticum) protein is ATP synthase subunit delta.